A 526-amino-acid chain; its full sequence is Putative UDP-glucuronosyltransferase ugt-48 (526 aa).

A signal peptide spans 1 to 17 (MLLRILTFLAVCQVTTS). N58 and N305 each carry an N-linked (GlcNAc...) asparagine glycan. A helical transmembrane segment spans residues 489-509 (FYNLDIIITAASIPVLIFIVL). Residue N513 is glycosylated (N-linked (GlcNAc...) asparagine).

Belongs to the UDP-glycosyltransferase family. In terms of assembly, interacts with cmd-1 in the presence of Ca(2+).

Its subcellular location is the membrane. The enzyme catalyses glucuronate acceptor + UDP-alpha-D-glucuronate = acceptor beta-D-glucuronoside + UDP + H(+). This Caenorhabditis elegans protein is Putative UDP-glucuronosyltransferase ugt-48 (ugt-48).